The following is a 117-amino-acid chain: Ig heavy chain V region MOO (117 aa).

One can recognise an Ig-like domain in the interval 1-116; the sequence is EVKLVESGGD…FGQGTIVTVS (116 aa).

This chain is Ig heavy chain V region MOO, found in Canis lupus familiaris (Dog).